A 256-amino-acid chain; its full sequence is MLRIADKTFDSHLFTGTGKFASAQLMVDAIRASGSQLVTLAMKRVDLRKPNDAILSPLLEAGVTLLPNTSGAKTAEEAIFAAQLAREALGTHWLKLEIHPDARWLLPDPIETLKAAGELVKQGFVVLPYCGADPVLCKRLEEVGCAAVMPLGAPIGSNQGLETRAMLEIIIQQATVPVVVDAGIGVPSHATQALEMGADAVLVNTAIAVANDPVMMANAFRLAVEAGVLARQAVPGNRSVYASATSPLTGFLEVSA.

Lysine 95 functions as the Schiff-base intermediate with DXP in the catalytic mechanism. 1-deoxy-D-xylulose 5-phosphate is bound by residues glycine 156, 182–183, and 204–205; these read AG and NT.

Belongs to the ThiG family. As to quaternary structure, homotetramer. Forms heterodimers with either ThiH or ThiS.

It localises to the cytoplasm. It catalyses the reaction [ThiS sulfur-carrier protein]-C-terminal-Gly-aminoethanethioate + 2-iminoacetate + 1-deoxy-D-xylulose 5-phosphate = [ThiS sulfur-carrier protein]-C-terminal Gly-Gly + 2-[(2R,5Z)-2-carboxy-4-methylthiazol-5(2H)-ylidene]ethyl phosphate + 2 H2O + H(+). It participates in cofactor biosynthesis; thiamine diphosphate biosynthesis. Functionally, catalyzes the rearrangement of 1-deoxy-D-xylulose 5-phosphate (DXP) to produce the thiazole phosphate moiety of thiamine. Sulfur is provided by the thiocarboxylate moiety of the carrier protein ThiS. In vitro, sulfur can be provided by H(2)S. The protein is Thiazole synthase of Salmonella arizonae (strain ATCC BAA-731 / CDC346-86 / RSK2980).